The primary structure comprises 211 residues: Small ribosomal subunit protein uS5 (211 aa).

Residues 51–114 form the S5 DRBM domain; the sequence is LKHEVLDVSL…ANAKLNITPV (64 aa).

The protein belongs to the universal ribosomal protein uS5 family. As to quaternary structure, part of the 30S ribosomal subunit. Contacts protein S4.

In terms of biological role, with S4 and S12 plays an important role in translational accuracy. This chain is Small ribosomal subunit protein uS5, found in Ignicoccus hospitalis (strain KIN4/I / DSM 18386 / JCM 14125).